The chain runs to 274 residues: MQFSKMHGLGNDFMVVDAVTQNVYFSPELIRRLADRHLGIGFDQLLIVEPPYDPDLDFHYRIFNADGSEVAQCGNGARCFARFVRLKGLTNKNEIRVSTQSGRMVLSITQDELVCVNMGEPNFEPQQIPFRANKAENIYLMRAAEQTVMCGVVSMGNPHCVLQVDNVKTAAVETLGPVLESHERFPERVNVGFMEVVHREHIRLRVYERGAGETQACGSGACAAVAVGIQQASLAEKVRVDLPGGSLHIAWKGPGHPLYMTGPATHVYDGFIHL.

Asparagine 11, glutamine 44, and asparagine 64 together coordinate substrate. Cysteine 73 functions as the Proton donor in the catalytic mechanism. Substrate contacts are provided by residues 74-75, asparagine 157, asparagine 190, and 208-209; these read GN and ER. Cysteine 217 functions as the Proton acceptor in the catalytic mechanism. A substrate-binding site is contributed by 218-219; that stretch reads GS.

The protein belongs to the diaminopimelate epimerase family. As to quaternary structure, homodimer.

It is found in the cytoplasm. It carries out the reaction (2S,6S)-2,6-diaminopimelate = meso-2,6-diaminopimelate. The protein operates within amino-acid biosynthesis; L-lysine biosynthesis via DAP pathway; DL-2,6-diaminopimelate from LL-2,6-diaminopimelate: step 1/1. Its function is as follows. Catalyzes the stereoinversion of LL-2,6-diaminopimelate (L,L-DAP) to meso-diaminopimelate (meso-DAP), a precursor of L-lysine and an essential component of the bacterial peptidoglycan. The chain is Diaminopimelate epimerase from Erwinia tasmaniensis (strain DSM 17950 / CFBP 7177 / CIP 109463 / NCPPB 4357 / Et1/99).